Reading from the N-terminus, the 449-residue chain is Type 3 secretion system ATPase (449 aa).

An ATP-binding site is contributed by 178–183 (GCGKTT).

The protein belongs to the ATPase alpha/beta chains family. T3SS ATPase subfamily. As to quaternary structure, the core secretion machinery of the T3SS is composed of approximately 20 different proteins, including cytoplasmic components, a base, an export apparatus and a needle. This subunit is part of the cytosolic complex. Forms homododecamers. Comprises two hexameric rings that are probably stacked face-to-face by the association of their C-terminal domains. Also present as monomer and homohexamer in solution.

Its subcellular location is the cytoplasm. The catalysed reaction is ATP + H2O + cellular proteinSide 1 = ADP + phosphate + cellular proteinSide 2.. Oligomerization increases ATPase activity. ATPase component of the type III secretion system (T3SS), also called injectisome, which is used to inject bacterial effector proteins into eukaryotic host cells. Acts as a molecular motor to provide the energy that is required for the export of proteins. Required for type III secretion apparatus (T3SA) formation, proper protein secretion, host cell invasion and virulence. May play a critical role in T3SS substrate recognition, disassembly of the effector/chaperone complex and unfolding of the effector in an ATP-dependent manner prior to secretion. The sequence is that of Type 3 secretion system ATPase from Pseudomonas savastanoi pv. phaseolicola (Pseudomonas syringae pv. phaseolicola).